A 205-amino-acid polypeptide reads, in one-letter code: Small ribosomal subunit protein uS4 (205 aa).

The S4 RNA-binding domain occupies 94 to 157 (SRLDTVVYRM…KQIPLIQESV (64 aa)).

The protein belongs to the universal ribosomal protein uS4 family. As to quaternary structure, part of the 30S ribosomal subunit. Contacts protein S5. The interaction surface between S4 and S5 is involved in control of translational fidelity.

In terms of biological role, one of the primary rRNA binding proteins, it binds directly to 16S rRNA where it nucleates assembly of the body of the 30S subunit. Its function is as follows. With S5 and S12 plays an important role in translational accuracy. The chain is Small ribosomal subunit protein uS4 from Rickettsia conorii (strain ATCC VR-613 / Malish 7).